Reading from the N-terminus, the 287-residue chain is rRNA adenine N-6-methyltransferase (287 aa).

Over residues Met1 to Leu13 the composition is skewed to basic residues. The tract at residues Met1–Phe21 is disordered. Residues His25, Met27, Gly52, Glu73, Asp98, and Asn114 each coordinate S-adenosyl-L-methionine.

This sequence belongs to the class I-like SAM-binding methyltransferase superfamily. rRNA adenine N(6)-methyltransferase family. In terms of assembly, homodimer.

Involved in erythromycin resistance. The sequence is that of rRNA adenine N-6-methyltransferase (ermJ) from Bacillus anthracis.